The following is a 320-amino-acid chain: Malate dehydrogenase (320 aa).

NAD(+) is bound by residues 10-15 (GAGNIG) and D34. Residues R83 and R89 each contribute to the substrate site. NAD(+)-binding positions include N96 and 119-121 (ITN). Substrate contacts are provided by N121 and R152. The active-site Proton acceptor is the H176.

Belongs to the LDH/MDH superfamily. MDH type 3 family.

It carries out the reaction (S)-malate + NAD(+) = oxaloacetate + NADH + H(+). In terms of biological role, catalyzes the reversible oxidation of malate to oxaloacetate. This is Malate dehydrogenase from Novosphingobium aromaticivorans (strain ATCC 700278 / DSM 12444 / CCUG 56034 / CIP 105152 / NBRC 16084 / F199).